Here is a 424-residue protein sequence, read N- to C-terminus: UDP-N-acetylglucosamine 1-carboxyvinyltransferase (424 aa).

22–23 is a phosphoenolpyruvate binding site; sequence KN. Residue arginine 93 participates in UDP-N-acetyl-alpha-D-glucosamine binding. The active-site Proton donor is the cysteine 117. Cysteine 117 carries the post-translational modification 2-(S-cysteinyl)pyruvic acid O-phosphothioketal. UDP-N-acetyl-alpha-D-glucosamine-binding positions include 162-165, aspartate 307, and isoleucine 329; that span reads KVSV.

This sequence belongs to the EPSP synthase family. MurA subfamily.

The protein resides in the cytoplasm. It carries out the reaction phosphoenolpyruvate + UDP-N-acetyl-alpha-D-glucosamine = UDP-N-acetyl-3-O-(1-carboxyvinyl)-alpha-D-glucosamine + phosphate. Its pathway is cell wall biogenesis; peptidoglycan biosynthesis. In terms of biological role, cell wall formation. Adds enolpyruvyl to UDP-N-acetylglucosamine. The polypeptide is UDP-N-acetylglucosamine 1-carboxyvinyltransferase (Glaesserella parasuis serovar 5 (strain SH0165) (Haemophilus parasuis)).